Consider the following 515-residue polypeptide: Maturase K (515 aa).

It belongs to the intron maturase 2 family. MatK subfamily.

It is found in the plastid. Its subcellular location is the chloroplast. In terms of biological role, usually encoded in the trnK tRNA gene intron. Probably assists in splicing its own and other chloroplast group II introns. This Trillium luteum (Yellow wakerobin) protein is Maturase K.